A 127-amino-acid polypeptide reads, in one-letter code: Thioredoxin domain-containing protein 8 (127 aa).

One can recognise a Thioredoxin domain in the interval 2–127; it reads VKRIKNMSEL…QLEKKIQELM (126 aa). Residues Cys32 and Cys35 are joined by a disulfide bond.

The protein belongs to the thioredoxin family. In terms of tissue distribution, testis-specific. Only expressed during spermiogenesis, prominently in the Golgi apparatus of pachytene spermatocytes and round and elongated spermatids, with a transient localization in the developing acrosome of round spermatids (at protein level).

It localises to the cytoplasm. The protein resides in the golgi apparatus. In terms of biological role, may be required for post-translational modifications of proteins required for acrosomal biogenesis. May act by reducing disulfide bonds within the sperm. The sequence is that of Thioredoxin domain-containing protein 8 (Txndc8) from Mus musculus (Mouse).